A 421-amino-acid chain; its full sequence is Replication factor C large subunit (421 aa).

ATP is bound at residue G63–T70.

This sequence belongs to the activator 1 small subunits family. RfcL subfamily. In terms of assembly, heteromultimer composed of small subunits (RfcS) and large subunits (RfcL).

Functionally, part of the RFC clamp loader complex which loads the PCNA sliding clamp onto DNA. This chain is Replication factor C large subunit, found in Pyrobaculum calidifontis (strain DSM 21063 / JCM 11548 / VA1).